We begin with the raw amino-acid sequence, 334 residues long: Protein SCO1 homolog 1, mitochondrial (334 aa).

The transit peptide at 1 to 13 (MASALCRTASRLR) directs the protein to the mitochondrion. The interval 74 to 120 (SASDTTSKHDSGKPETKSSEKNEKSGGSESSDGGSDHKNERASGKDV) is disordered. 2 stretches are compositionally biased toward basic and acidic residues: residues 79–99 (TSKH…EKSG) and 107–120 (GSDH…GKDV). Residues 125–144 (VSWMSFFLLFATGAGLVYYY) traverse the membrane as a helical segment. Residues 166–331 (PSAGKAAIGG…TDGVVKEIRQ (166 aa)) form the Thioredoxin domain. 3 residues coordinate Cu cation: cysteine 206, cysteine 210, and histidine 295.

The protein belongs to the SCO1/2 family. As to expression, expressed in the whole plant with highest expression in imbibed seeds, embryos, endosperm, and root tips.

It is found in the mitochondrion inner membrane. Functionally, thought to play a role in cellular copper homeostasis, mitochondrial redox signaling or insertion of copper into the active site of COX. Plays an essential role in embryo development. The polypeptide is Protein SCO1 homolog 1, mitochondrial (HCC1) (Arabidopsis thaliana (Mouse-ear cress)).